Here is a 683-residue protein sequence, read N- to C-terminus: Amino acid transporter heavy chain SLC3A1 (683 aa).

The segment covering 1 to 10 has biased composition (basic and acidic residues); the sequence is MNEDKDKRDS. Positions 1–50 are disordered; the sequence is MNEDKDKRDSIQMSMKGCRTNNGFVQNEDIQEQDPDSRDTPQSNAVSIPA. The Cytoplasmic portion of the chain corresponds to 1–86; sequence MNEDKDKRDS…ARYRVPREIL (86 aa). Ser10 is subject to Phosphoserine. A helical; Signal-anchor for type II membrane protein transmembrane segment spans residues 87–107; it reads FWLTVVSVFLLIGATIAIIII. Over 108 to 683 the chain is Extracellular; the sequence is SPKCLDWWQA…SVLDLLYSSC (576 aa). Asn211 is a binding site for Ca(2+). N-linked (GlcNAc...) asparagine glycosylation is found at Asn211, Asn238, and Asn258. Cys239 and Cys270 are disulfide-bonded. Ca(2+) is bound by residues Asp281, Phe315, Leu316, and Glu318. Asn329 carries N-linked (GlcNAc...) asparagine glycosylation. Phosphoserine is present on Ser383. Asn510, Asn520, and Asn574 each carry an N-linked (GlcNAc...) asparagine glycan. Disulfide bonds link Cys568-Cys664 and Cys671-Cys683.

In terms of assembly, disulfide-linked heterodimer composed of the catalytic light subunit SLC7A9 and the heavy subunit SLC3A1. The heterodimer is the minimal functional unit. Assembles in non-covalently linked heterotetramers (dimers of heterodimers) and higher order oligomers; the oligomerization is mediated by SLC3A1 likely to prevent degradation in the endoplasmic reticulum and facilitate heteromer trafficking to the plasma membrane. Disulfide-linked heterodimer composed of the catalytic light subunit SLC7A13 and the heavy subunit SLC3A1. Predominantly expressed in kidney and intestine. In kidney localized to the apical membrane of the proximal tubules.

Its subcellular location is the cell membrane. The protein resides in the apical cell membrane. Its function is as follows. Acts as a chaperone that facilitates biogenesis and trafficking of functional transporter heteromers to the plasma membrane. Associates with SLC7A9 to form a functional transporter complex that mediates the electrogenic exchange between cationic amino acids and neutral amino acids, with a stoichiometry of 1:1. SLC7A9-SLC3A1 transporter has system b(0,+)-like activity with high affinity for extracellular cationic amino acids and L-cystine and lower affinity for intracellular neutral amino acids. Substrate exchange is driven by high concentration of intracellular neutral amino acids and the intracellular reduction of L-cystine to L-cysteine. SLC7A9-SLC3A1 acts as a major transporter for reabsorption of L-cystine and dibasic amino acids across the brush border membrane in early proximal tubules. Associates with SLC7A13 to form a functional complex that transports anionic and neutral amino acids via exchange or facilitated diffusion. SLC7A13-SLC3A1 may act as a major transporter for L-cystine in late proximal tubules, ensuring its reabsorption from the luminal fluid in exchange for cytosolic L-glutamate or L-aspartate. The polypeptide is Amino acid transporter heavy chain SLC3A1 (Slc3a1) (Rattus norvegicus (Rat)).